Consider the following 315-residue polypeptide: Inosine-uridine preferring nucleoside hydrolase (315 aa).

Asp-10 lines the Ca(2+) pocket. Asp-14 lines the substrate pocket. Residues Asp-15 and Thr-126 each coordinate Ca(2+). Positions 160, 166, and 168 each coordinate substrate. Catalysis depends on His-241, which acts as the Proton donor. Asp-242 contributes to the Ca(2+) binding site.

Homotetramer. Ca(2+) serves as cofactor.

It carries out the reaction inosine + H2O = hypoxanthine + D-ribose. It catalyses the reaction uridine + H2O = D-ribose + uracil. Its pathway is purine metabolism; purine nucleoside salvage. In terms of biological role, catalyzes the hydrolysis of the N-glycosidic bond of commonly occurring purine and pyrimidine nucleosides into ribose and the base, but has a preference for inosine and uridine as substrates. Is not active on thymidine and 2'-deoxynucleosides. Functions in purine salvage from the blood of the host, a fundamental pathway since protozoan parasites such as C.fasciculata are incapable of de novo purine biosynthesis. The chain is Inosine-uridine preferring nucleoside hydrolase (IUNH) from Crithidia fasciculata.